The primary structure comprises 454 residues: tRNA modification GTPase MnmE (454 aa).

(6S)-5-formyl-5,6,7,8-tetrahydrofolate-binding residues include R23, E80, and K120. One can recognise a TrmE-type G domain in the interval 216 to 377 (GMKVVIAGRP…LRSHLKEAMG (162 aa)). N226 provides a ligand contact to K(+). GTP contacts are provided by residues 226-231 (NAGKSS), 245-251 (TDIAGTT), 270-273 (DTAG), and 358-360 (SAR). S230 serves as a coordination point for Mg(2+). Residues T245, I247, and T250 each contribute to the K(+) site. T251 contacts Mg(2+). K454 provides a ligand contact to (6S)-5-formyl-5,6,7,8-tetrahydrofolate.

This sequence belongs to the TRAFAC class TrmE-Era-EngA-EngB-Septin-like GTPase superfamily. TrmE GTPase family. As to quaternary structure, homodimer. Heterotetramer of two MnmE and two MnmG subunits. It depends on K(+) as a cofactor.

Its subcellular location is the cytoplasm. Functionally, exhibits a very high intrinsic GTPase hydrolysis rate. Involved in the addition of a carboxymethylaminomethyl (cmnm) group at the wobble position (U34) of certain tRNAs, forming tRNA-cmnm(5)s(2)U34. The chain is tRNA modification GTPase MnmE from Proteus mirabilis (strain HI4320).